A 329-amino-acid chain; its full sequence is Probable quinone oxidoreductase (329 aa).

A Phosphoserine modification is found at Ser-191.

This sequence belongs to the zinc-containing alcohol dehydrogenase family. Quinone oxidoreductase subfamily.

It is found in the cytoplasm. The protein localises to the nucleus. The enzyme catalyses 2 a quinone + NADPH + H(+) = 2 a 1,4-benzosemiquinone + NADP(+). The protein is Probable quinone oxidoreductase (zta1) of Schizosaccharomyces pombe (strain 972 / ATCC 24843) (Fission yeast).